A 221-amino-acid polypeptide reads, in one-letter code: Chalcone--flavanone isomerase (221 aa).

Thr50, Asn115, and Thr192 together coordinate substrate.

This sequence belongs to the chalcone isomerase family.

It carries out the reaction a chalcone = a flavanone.. It participates in secondary metabolite biosynthesis; flavonoid biosynthesis. Its function is as follows. Catalyzes the intramolecular cyclization of bicyclic chalcones into tricyclic (S)-flavanones. Responsible for the isomerization of 4,2',4',6'-tetrahydroxychalcone (also termed chalcone) into naringenin. This Phaseolus vulgaris (Kidney bean) protein is Chalcone--flavanone isomerase (CHI).